A 196-amino-acid polypeptide reads, in one-letter code: GTP cyclohydrolase-2 (196 aa).

49–53 (RVHSE) is a binding site for GTP. Residues Cys54, Cys65, and Cys67 each coordinate Zn(2+). GTP contacts are provided by residues Gln70, 92–94 (EGR), and Thr114. Asp126 serves as the catalytic Proton acceptor. Arg128 acts as the Nucleophile in catalysis. Thr149 and Lys154 together coordinate GTP.

The protein belongs to the GTP cyclohydrolase II family. Homodimer. Requires Zn(2+) as cofactor.

It carries out the reaction GTP + 4 H2O = 2,5-diamino-6-hydroxy-4-(5-phosphoribosylamino)-pyrimidine + formate + 2 phosphate + 3 H(+). Its pathway is cofactor biosynthesis; riboflavin biosynthesis; 5-amino-6-(D-ribitylamino)uracil from GTP: step 1/4. Functionally, catalyzes the conversion of GTP to 2,5-diamino-6-ribosylamino-4(3H)-pyrimidinone 5'-phosphate (DARP), formate and pyrophosphate. The polypeptide is GTP cyclohydrolase-2 (Enterobacter sp. (strain 638)).